Reading from the N-terminus, the 961-residue chain is DNA replication licensing factor MCM2 (961 aa).

Over residues 1-17 (MDDSENNAPSTPGSPGF) the composition is skewed to polar residues. Disordered regions lie at residues 1-81 (MDDS…FNDN) and 120-220 (AEAE…EEDE). The segment covering 39 to 78 (SDDDDDDVVGAEEAEVDPNVLPEDDGVVAAEEEEDGEDLF) has biased composition (acidic residues). 2 stretches are compositionally biased toward basic and acidic residues: residues 120–146 (AEAELDARDVRTGAAPDRKLPRMLHDQ) and 166–176 (PPREPRTPRSD). Positions 205-220 (QTDDDPYEDEFDEEDE) are enriched in acidic residues. The C4-type zinc-finger motif lies at 380–406 (CSKCGTVLGPFFQNSYTEVKVGSCPEC). Positions 524-730 (IGERIVKSIA…FTDEMLARFV (207 aa)) constitute an MCM domain. 574 to 581 (GDPGTAKS) lines the ATP pocket. Positions 706–709 (SRFD) match the Arginine finger motif.

Belongs to the MCM family. As to quaternary structure, component of the minichromosome maintenance (MCM) complex, a heterotetramer composed of MCM2, MCM3, MCM4, MCM5, MCM6 and MCM7.

The protein resides in the nucleus. The catalysed reaction is ATP + H2O = ADP + phosphate + H(+). Functionally, probable component of the MCM2-7 complex (MCM complex) that may function as a DNA helicase and which is essential to undergo a single round of replication initiation and elongation per cell cycle in eukaryotic cells. The sequence is that of DNA replication licensing factor MCM2 from Oryza sativa subsp. indica (Rice).